The sequence spans 200 residues: Recombination protein RecR (200 aa).

The C4-type zinc-finger motif lies at 57-72; sequence CRSCRTLTEEELCPQC. The 96-residue stretch at 80 to 175 folds into the Toprim domain; it reads TLLCVVEGPT…VASRIAHGVP (96 aa).

The protein belongs to the RecR family.

Functionally, may play a role in DNA repair. It seems to be involved in an RecBC-independent recombinational process of DNA repair. It may act with RecF and RecO. This Pseudomonas savastanoi pv. phaseolicola (strain 1448A / Race 6) (Pseudomonas syringae pv. phaseolicola (strain 1448A / Race 6)) protein is Recombination protein RecR.